Reading from the N-terminus, the 332-residue chain is Holliday junction branch migration complex subunit RuvB (332 aa).

A large ATPase domain (RuvB-L) region spans residues 1–181 (MSRILDNELM…FGITGHMEYY (181 aa)). Residues L20, R21, G62, K65, T66, T67, 128-130 (EDF), R171, Y181, and R218 each bind ATP. T66 is a binding site for Mg(2+). Residues 182 to 252 (EAGDLTEIVE…ITDQALSMLD (71 aa)) are small ATPAse domain (RuvB-S). Residues 255-332 (QEGLDYVDQK…EHLGYEYMKE (78 aa)) form a head domain (RuvB-H) region. 4 residues coordinate DNA: R291, R310, R312, and R315.

The protein belongs to the RuvB family. As to quaternary structure, homohexamer. Forms an RuvA(8)-RuvB(12)-Holliday junction (HJ) complex. HJ DNA is sandwiched between 2 RuvA tetramers; dsDNA enters through RuvA and exits via RuvB. An RuvB hexamer assembles on each DNA strand where it exits the tetramer. Each RuvB hexamer is contacted by two RuvA subunits (via domain III) on 2 adjacent RuvB subunits; this complex drives branch migration. In the full resolvosome a probable DNA-RuvA(4)-RuvB(12)-RuvC(2) complex forms which resolves the HJ.

It is found in the cytoplasm. It catalyses the reaction ATP + H2O = ADP + phosphate + H(+). The RuvA-RuvB-RuvC complex processes Holliday junction (HJ) DNA during genetic recombination and DNA repair, while the RuvA-RuvB complex plays an important role in the rescue of blocked DNA replication forks via replication fork reversal (RFR). RuvA specifically binds to HJ cruciform DNA, conferring on it an open structure. The RuvB hexamer acts as an ATP-dependent pump, pulling dsDNA into and through the RuvAB complex. RuvB forms 2 homohexamers on either side of HJ DNA bound by 1 or 2 RuvA tetramers; 4 subunits per hexamer contact DNA at a time. Coordinated motions by a converter formed by DNA-disengaged RuvB subunits stimulates ATP hydrolysis and nucleotide exchange. Immobilization of the converter enables RuvB to convert the ATP-contained energy into a lever motion, pulling 2 nucleotides of DNA out of the RuvA tetramer per ATP hydrolyzed, thus driving DNA branch migration. The RuvB motors rotate together with the DNA substrate, which together with the progressing nucleotide cycle form the mechanistic basis for DNA recombination by continuous HJ branch migration. Branch migration allows RuvC to scan DNA until it finds its consensus sequence, where it cleaves and resolves cruciform DNA. This chain is Holliday junction branch migration complex subunit RuvB, found in Streptococcus sanguinis (strain SK36).